A 179-amino-acid polypeptide reads, in one-letter code: ATP synthase subunit delta (179 aa).

This sequence belongs to the ATPase delta chain family. In terms of assembly, F-type ATPases have 2 components, F(1) - the catalytic core - and F(0) - the membrane proton channel. F(1) has five subunits: alpha(3), beta(3), gamma(1), delta(1), epsilon(1). F(0) has three main subunits: a(1), b(2) and c(10-14). The alpha and beta chains form an alternating ring which encloses part of the gamma chain. F(1) is attached to F(0) by a central stalk formed by the gamma and epsilon chains, while a peripheral stalk is formed by the delta and b chains.

It is found in the cell membrane. Its function is as follows. F(1)F(0) ATP synthase produces ATP from ADP in the presence of a proton or sodium gradient. F-type ATPases consist of two structural domains, F(1) containing the extramembraneous catalytic core and F(0) containing the membrane proton channel, linked together by a central stalk and a peripheral stalk. During catalysis, ATP synthesis in the catalytic domain of F(1) is coupled via a rotary mechanism of the central stalk subunits to proton translocation. In terms of biological role, this protein is part of the stalk that links CF(0) to CF(1). It either transmits conformational changes from CF(0) to CF(1) or is implicated in proton conduction. The polypeptide is ATP synthase subunit delta (Rubrobacter xylanophilus (strain DSM 9941 / JCM 11954 / NBRC 16129 / PRD-1)).